A 170-amino-acid chain; its full sequence is Cyclic dof factor 4 (170 aa).

Positions 25–51 (NEEETHPPEQEATIAVRSSSSSDLTAE) are disordered. The Dof-type zinc-finger motif lies at 58–112 (IACPRCKSMETKFCYFNNYNVNQPRHFCKGCHRYWTAGGALRNVPVGAGRRKSKP). C60, C63, C85, and C88 together coordinate Zn(2+).

Expressed in the vasculature of cotyledons and hypocotyls, leaves and roots.

It localises to the nucleus. Its function is as follows. Transcription factor that binds specifically to a 5'-AA[AG]G-3' consensus core sequence. Transcriptional repressor of 'CONSTANS' expression. Regulates a photoperiodic flowering response. The chain is Cyclic dof factor 4 (CDF4) from Arabidopsis thaliana (Mouse-ear cress).